The primary structure comprises 875 residues: DNA mismatch repair protein MutS (875 aa).

Residue G626 to S633 participates in ATP binding. Residues R830–P855 are disordered. Positions P845 to P855 are enriched in basic and acidic residues.

The protein belongs to the DNA mismatch repair MutS family.

In terms of biological role, this protein is involved in the repair of mismatches in DNA. It is possible that it carries out the mismatch recognition step. This protein has a weak ATPase activity. In Cereibacter sphaeroides (strain ATCC 17023 / DSM 158 / JCM 6121 / CCUG 31486 / LMG 2827 / NBRC 12203 / NCIMB 8253 / ATH 2.4.1.) (Rhodobacter sphaeroides), this protein is DNA mismatch repair protein MutS.